A 275-amino-acid polypeptide reads, in one-letter code: Probable endonuclease 4 (275 aa).

Zn(2+)-binding residues include His-66, His-106, Glu-140, Asp-172, His-175, His-209, Asp-222, His-224, and Glu-254.

Belongs to the AP endonuclease 2 family. The cofactor is Zn(2+).

It carries out the reaction Endonucleolytic cleavage to 5'-phosphooligonucleotide end-products.. Endonuclease IV plays a role in DNA repair. It cleaves phosphodiester bonds at apurinic or apyrimidinic (AP) sites, generating a 3'-hydroxyl group and a 5'-terminal sugar phosphate. This chain is Probable endonuclease 4, found in Halobacterium salinarum (strain ATCC 29341 / DSM 671 / R1).